A 420-amino-acid chain; its full sequence is FAD-dependent monooxygenase ntnJ (420 aa).

The helical transmembrane segment at 12–31 (FRVIVVGAGIGGLSAAVALA) threads the bilayer. Residues Glu-41 and Ala-54 each contribute to the FAD site. N-linked (GlcNAc...) asparagine glycosylation is present at Asn-124. Arg-187 is a catalytic residue. Asn-264 is a glycosylation site (N-linked (GlcNAc...) asparagine). Positions 302 and 315 each coordinate FAD.

The protein belongs to the paxM FAD-dependent monooxygenase family. The cofactor is FAD.

It localises to the membrane. Its pathway is secondary metabolite biosynthesis; terpenoid biosynthesis. In terms of biological role, FAD-dependent monooxygenase; part of the gene cluster that mediates the biosynthesis of the meroterpenoids nectripenoids A and B, as well as cochliquninone D and isocochliquninone E. The pathway probably begins with the HR-PKS ntnH that catalyzes two chain-extension steps to form a reduced triketide, which then primes the SAT domain in the NR-PKS ntnG to initiate three more cycles of extension to give a linear hexaketide corresponding to the polyketide part of nectripenoids. The FAD-dependent monooxygenase ntnJ then performs an oxidative decarboxylation at C11 of the ntnH/ntnG product, via an electrophilic aromatic hydroxylation with concomitant ipso-decarboxylation. The membrane-bound polyprenyl transferase ntnF then introduces a farnesyl group before the FAD-dependent monooxygenase ntnK functions as the first epoxidase on terminal C12'-C13' olefin, followed by a second epoxidation on C7'-C8' catalyzed by ntnA. The terpene cyclase/mutase ntnI then initiates the sequential tricyclic ring formation through protonation of the terminal epoxide and catalyzes the regioselective and stereoselective 6/6/6-tricyclic ring formation. The cytochrome P450 monooxygenase ntnM may then hydroxylate C1'. The protein is FAD-dependent monooxygenase ntnJ of Nectria sp.